The following is a 372-amino-acid chain: Steroid C26-monooxygenase (372 aa).

C314 serves as a coordination point for heme.

The protein belongs to the cytochrome P450 family. It depends on heme as a cofactor.

The catalysed reaction is cholest-4-en-3-one + 6 reduced [2Fe-2S]-[ferredoxin] + 3 O2 + 5 H(+) = (25R)-3-oxocholest-4-en-26-oate + 6 oxidized [2Fe-2S]-[ferredoxin] + 4 H2O. Its pathway is steroid metabolism; cholesterol degradation. Its function is as follows. Involved in the utilization of cholesterol as the sole carbon and energy source by degrading the side chain during infection. Primarily catalyzes the sequential oxidation of the terminal methyl of cholest-4-en-3-one into (25R)-26-hydroxycholest-4-en-3-one (alcohol), (25R)-26-oxocholest-4-en-3-one (aldehyde), to finally yield the carboxylic acid (25R)-3-oxocholest-4-en-26-oate. Also able to sequentially oxidize cholesterol itself, not only cholest-4-en-3-one. The polypeptide is Steroid C26-monooxygenase (cyp142) (Mycobacterium tuberculosis (strain CDC 1551 / Oshkosh)).